The chain runs to 331 residues: MMQTSRTLHNLGSKAASSAAPYQTECVESHQEANGVHYGKFALGPLERGQGITVGNALRRVLLSNLEGTAVTAVRIAGVTHEFSTVPGVREDVMEILLNMKELVLRSNAPDTQVGRLVAQGPGEVTAEKLQLPSEVEVINPRHHIATLAEGAILEMEFMIGRGRGYRAVDYSDSKSMAIDFLQIDSVFMPVRKVNYTVEAARVGQSLEKDRLILEIWTNGSLTPQEALSQAARILVGLFSPLQEVSFDTPPEPRQAEDNQKNQIPIEELQLSVRAYNCLKRAQINTVADLLVYTEEDLLEIKNFGQKSAEEVVQALKNRLGLTLPRERSKT.

The interval 1-246 is alpha N-terminal domain (alpha-NTD); it reads MMQTSRTLHN…GLFSPLQEVS (246 aa). The tract at residues 256-331 is alpha C-terminal domain (alpha-CTD); that stretch reads AEDNQKNQIP…LTLPRERSKT (76 aa).

Belongs to the RNA polymerase alpha chain family. As to quaternary structure, in cyanobacteria the RNAP catalytic core is composed of 2 alpha, 1 beta, 1 beta', 1 gamma and 1 omega subunit. When a sigma factor is associated with the core the holoenzyme is formed, which can initiate transcription.

It carries out the reaction RNA(n) + a ribonucleoside 5'-triphosphate = RNA(n+1) + diphosphate. DNA-dependent RNA polymerase catalyzes the transcription of DNA into RNA using the four ribonucleoside triphosphates as substrates. This is DNA-directed RNA polymerase subunit alpha from Synechococcus sp. (strain JA-3-3Ab) (Cyanobacteria bacterium Yellowstone A-Prime).